Here is a 348-residue protein sequence, read N- to C-terminus: Outer membrane protein assembly factor BamC (348 aa).

The N-terminal stretch at Met-1–Ala-19 is a signal peptide. Cys-20 carries N-palmitoyl cysteine lipidation. Residue Cys-20 is the site of S-diacylglycerol cysteine attachment.

It belongs to the BamC family. Part of the Bam complex.

The protein localises to the cell outer membrane. Its function is as follows. Part of the outer membrane protein assembly complex, which is involved in assembly and insertion of beta-barrel proteins into the outer membrane. The protein is Outer membrane protein assembly factor BamC of Vibrio atlanticus (strain LGP32) (Vibrio splendidus (strain Mel32)).